The following is a 416-amino-acid chain: 4-hydroxy-3-methylbut-2-en-1-yl diphosphate synthase (flavodoxin) (416 aa).

4 residues coordinate [4Fe-4S] cluster: C304, C307, C350, and E357.

It belongs to the IspG family. [4Fe-4S] cluster is required as a cofactor.

The catalysed reaction is (2E)-4-hydroxy-3-methylbut-2-enyl diphosphate + oxidized [flavodoxin] + H2O + 2 H(+) = 2-C-methyl-D-erythritol 2,4-cyclic diphosphate + reduced [flavodoxin]. The protein operates within isoprenoid biosynthesis; isopentenyl diphosphate biosynthesis via DXP pathway; isopentenyl diphosphate from 1-deoxy-D-xylulose 5-phosphate: step 5/6. In terms of biological role, converts 2C-methyl-D-erythritol 2,4-cyclodiphosphate (ME-2,4cPP) into 1-hydroxy-2-methyl-2-(E)-butenyl 4-diphosphate. The chain is 4-hydroxy-3-methylbut-2-en-1-yl diphosphate synthase (flavodoxin) from Rhizobium etli (strain ATCC 51251 / DSM 11541 / JCM 21823 / NBRC 15573 / CFN 42).